Reading from the N-terminus, the 3112-residue chain is Genome polyprotein (3112 aa).

Positions 234–383 (KLTQRRANKI…PDCLEGLTYY (150 aa)) constitute a Peptidase S30 domain. Catalysis depends on for P1 proteinase activity residues His286, Asp301, and Ser333. Residues 729–850 (TLVPKSGFCY…IETFKDYRIG (122 aa)) enclose the Peptidase C6 domain. Active-site for helper component proteinase activity residues include Cys737 and His809. The 152-residue stretch at 1278 to 1429 (NIATGAGNEF…CVPTNHKVDV (152 aa)) folds into the Helicase ATP-binding domain. 1291 to 1298 (GDVGSGKS) is an ATP binding site. The short motif at 1379-1382 (DECH) is the DECH box element. The Helicase C-terminal domain maps to 1444–1627 (SIDSHAEGLR…EVNFVTREQV (184 aa)). Residues 2096–2311 (DDNYVPHSRC…ISWKGVPTNM (216 aa)) form the Peptidase C4 domain. Active-site for nuclear inclusion protein A activity residues include His2140, Asp2174, and Cys2243. The RdRp catalytic domain occupies 2569–2687 (WKFIDADGSR…NAPQGVCETI (119 aa)). A disordered region spans residues 2818–2867 (HSGADQSGVVKDQTGDKAEGSGTKTEDPPNQTTDPVNNPSNGGNKDAPQN). The segment covering 2830–2844 (QTGDKAEGSGTKTED) has biased composition (basic and acidic residues). Residues 2845 to 2867 (PPNQTTDPVNNPSNGGNKDAPQN) are compositionally biased toward polar residues.

It belongs to the potyviridae genome polyprotein family. VPg is uridylylated by the polymerase and is covalently attached to the 5'-end of the genomic RNA. This uridylylated form acts as a nucleotide-peptide primer for the polymerase. Post-translationally, genome polyprotein of potyviruses undergoes post-translational proteolytic processing by the main proteinase NIa-pro resulting in the production of at least ten individual proteins. The P1 proteinase and the HC-pro cleave only their respective C-termini autocatalytically. 6K1 is essential for proper proteolytic separation of P3 from CI.

Its subcellular location is the host cytoplasmic vesicle. The protein resides in the virion. The enzyme catalyses RNA(n) + a ribonucleoside 5'-triphosphate = RNA(n+1) + diphosphate. It carries out the reaction Hydrolyzes glutaminyl bonds, and activity is further restricted by preferences for the amino acids in P6 - P1' that vary with the species of potyvirus, e.g. Glu-Xaa-Xaa-Tyr-Xaa-Gln-|-(Ser or Gly) for the enzyme from tobacco etch virus. The natural substrate is the viral polyprotein, but other proteins and oligopeptides containing the appropriate consensus sequence are also cleaved.. The catalysed reaction is Hydrolyzes a Gly-|-Gly bond at its own C-terminus, commonly in the sequence -Tyr-Xaa-Val-Gly-|-Gly, in the processing of the potyviral polyprotein.. Its function is as follows. Required for aphid transmission and also has proteolytic activity. Only cleaves a Gly-Gly dipeptide at its own C-terminus. Interacts with virions and aphid stylets. Acts as a suppressor of RNA-mediated gene silencing, also known as post-transcriptional gene silencing (PTGS), a mechanism of plant viral defense that limits the accumulation of viral RNAs. May have RNA-binding activity. Has helicase activity. It may be involved in replication. Functionally, indispensable for virus replication. In terms of biological role, mediates the cap-independent, EIF4E-dependent translation of viral genomic RNAs. Binds to the cap-binding site of host EIF4E and thus interferes with the host EIF4E-dependent mRNA export and translation. VPg-RNA directly binds EIF4E and is a template for transcription. Also forms trimeric complexes with EIF4E-EIF4G, which are templates for translation. Its function is as follows. Has RNA-binding and proteolytic activities. An RNA-dependent RNA polymerase that plays an essential role in the virus replication. Functionally, involved in aphid transmission, cell-to-cell and systemis movement, encapsidation of the viral RNA and in the regulation of viral RNA amplification. The protein is Genome polyprotein of Triticum aestivum (Wheat).